The sequence spans 107 residues: Ig kappa chain V-VI region SAPC 10 (107 aa).

Positions 1 to 23 (EIVLTQSPAITAASLGQKVTITC) are framework-1. Cys-23 and Cys-87 are joined by a disulfide. The tract at residues 24–33 (SASSSVSYMH) is complementarity-determining-1. Residues 34-48 (WYQQKSGTSPKPWIY) are framework-2. A complementarity-determining-2 region spans residues 49-55 (EISKLAS). Residues 56 to 87 (GVPARFSGSGSGTSYSLTISSMEAEDAAIYYC) are framework-3. The interval 88–96 (QQWNYPLIT) is complementarity-determining-3. The framework-4 stretch occupies residues 97–106 (FGGGTKLEIK).

This Mus musculus (Mouse) protein is Ig kappa chain V-VI region SAPC 10.